Reading from the N-terminus, the 410-residue chain is Alanine racemase (410 aa).

An RPE1 insert domain is found at 28-76; sequence VDFLHNVANKEEFAGNTSPRTAAYTLVREDASLGSTPKLPLGASYAKNL. The active-site Proton acceptor; specific for D-alanine is the Lys83. Lys83 carries the N6-(pyridoxal phosphate)lysine modification. Position 182 (Arg182) interacts with substrate. Residue Tyr305 is the Proton acceptor; specific for L-alanine of the active site. Met353 is a binding site for substrate.

Belongs to the alanine racemase family. The cofactor is pyridoxal 5'-phosphate.

The catalysed reaction is L-alanine = D-alanine. Its pathway is amino-acid biosynthesis; D-alanine biosynthesis; D-alanine from L-alanine: step 1/1. Its function is as follows. Catalyzes the interconversion of L-alanine and D-alanine. May also act on other amino acids. This Rickettsia bellii (strain RML369-C) protein is Alanine racemase (alr).